We begin with the raw amino-acid sequence, 57 residues long: Putative secreted protein ML2569.1 (57 aa).

The N-terminal stretch at 1–32 is a signal peptide; sequence MSRIVAPAAASVVVGLLLGAATIFGMTLMVQQ. The segment at 34 to 57 is disordered; the sequence is TKPPLPGGDPQSSVLNRVEYGNRT.

The chain is Putative secreted protein ML2569.1 from Mycobacterium leprae (strain TN).